The following is a 246-amino-acid chain: ATP synthase subunit a, chloroplastic (246 aa).

A run of 5 helical transmembrane segments spans residues 35–55 (GQVL…GLIA), 94–114 (VPFI…GALL), 132–152 (DINT…YAGI), 198–218 (LVVG…VMLL), and 219–239 (GVFT…AYIG).

This sequence belongs to the ATPase A chain family. In terms of assembly, F-type ATPases have 2 components, CF(1) - the catalytic core - and CF(0) - the membrane proton channel. CF(1) has five subunits: alpha(3), beta(3), gamma(1), delta(1), epsilon(1). CF(0) has four main subunits: a, b, b' and c.

It is found in the plastid. Its subcellular location is the chloroplast thylakoid membrane. In terms of biological role, key component of the proton channel; it plays a direct role in the translocation of protons across the membrane. This Stigeoclonium helveticum (Green alga) protein is ATP synthase subunit a, chloroplastic.